Here is a 1434-residue protein sequence, read N- to C-terminus: DNA-directed RNA polymerase subunit beta (1434 aa).

This sequence belongs to the RNA polymerase beta chain family. As to quaternary structure, the RNAP catalytic core consists of 2 alpha, 1 beta, 1 beta' and 1 omega subunit. When a sigma factor is associated with the core the holoenzyme is formed, which can initiate transcription.

It carries out the reaction RNA(n) + a ribonucleoside 5'-triphosphate = RNA(n+1) + diphosphate. In terms of biological role, DNA-dependent RNA polymerase catalyzes the transcription of DNA into RNA using the four ribonucleoside triphosphates as substrates. The protein is DNA-directed RNA polymerase subunit beta of Ureaplasma urealyticum serovar 10 (strain ATCC 33699 / Western).